We begin with the raw amino-acid sequence, 232 residues long: Large ribosomal subunit protein uL1 (232 aa).

Belongs to the universal ribosomal protein uL1 family. In terms of assembly, part of the 50S ribosomal subunit.

Functionally, binds directly to 23S rRNA. The L1 stalk is quite mobile in the ribosome, and is involved in E site tRNA release. In terms of biological role, protein L1 is also a translational repressor protein, it controls the translation of the L11 operon by binding to its mRNA. This is Large ribosomal subunit protein uL1 from Jannaschia sp. (strain CCS1).